The following is a 261-amino-acid chain: MSKISPLAIIEDGAVIGKDVEIGAYCIISSDSTIGDGTKIEQNSCIYGKTTIGKNNHIFSHAVIGSAPQDLKFAGEDVELIIGDNNKIREFTLFNPGTKGGGGKTIIGSHNLFMGYVHIGHDVIIGNHCILANAATLAGHVEMGDYAVIGGMTPIHQFVHIGEYAMVAGASALAQDVPPFCMAEGNRATLRGLNLTGLRRNIEREEIDEIKSAYKELFEAGKPLKDVANEILEHTSSHHVQSLCNFVLKTKRGIPYERKHL.

This sequence belongs to the transferase hexapeptide repeat family. LpxA subfamily. Homotrimer.

It localises to the cytoplasm. The catalysed reaction is a (3R)-hydroxyacyl-[ACP] + UDP-N-acetyl-alpha-D-glucosamine = a UDP-3-O-[(3R)-3-hydroxyacyl]-N-acetyl-alpha-D-glucosamine + holo-[ACP]. The protein operates within glycolipid biosynthesis; lipid IV(A) biosynthesis; lipid IV(A) from (3R)-3-hydroxytetradecanoyl-[acyl-carrier-protein] and UDP-N-acetyl-alpha-D-glucosamine: step 1/6. In terms of biological role, involved in the biosynthesis of lipid A, a phosphorylated glycolipid that anchors the lipopolysaccharide to the outer membrane of the cell. The sequence is that of Acyl-[acyl-carrier-protein]--UDP-N-acetylglucosamine O-acyltransferase from Sulfurimonas denitrificans (strain ATCC 33889 / DSM 1251) (Thiomicrospira denitrificans (strain ATCC 33889 / DSM 1251)).